Here is a 221-residue protein sequence, read N- to C-terminus: Casparian strip membrane protein 3 (221 aa).

Residues 1-12 (MDIEKAASRREE) show a composition bias toward basic and acidic residues. A disordered region spans residues 1 to 28 (MDIEKAASRREEEEPIVQRPKLDKGKGK). Topologically, residues 1 to 58 (MDIEKAASRREEEEPIVQRPKLDKGKGKAHVFAPPMNYNRIMDKHKQEKVSAAGWKRG) are cytoplasmic. The chain crosses the membrane as a helical span at residues 59-79 (VAIFDFVLRLIAAITAMAAAA). Over 80-109 (KMATTEETLPFFTQFLQFQAEYTDLPTMSS) the chain is Extracellular. The chain crosses the membrane as a helical span at residues 110–130 (FVIVNSIVGGYLTLSLPFSIV). At 131-148 (CILRPLAVPPRLFLIICD) the chain is on the cytoplasmic side. A helical transmembrane segment spans residues 149–169 (TAMMGLTMMAASASAAIVYLA). The Extracellular segment spans residues 170 to 194 (HNGNSSSNWLPVCQQFGDFCQGTSG). The N-linked (GlcNAc...) asparagine glycan is linked to Asn-173. A helical membrane pass occupies residues 195 to 215 (AVVASFIAATLLMFLVILSAF). The Cytoplasmic segment spans residues 216 to 221 (ALKRST).

It belongs to the Casparian strip membrane proteins (CASP) family. Homodimer and heterodimers.

Its subcellular location is the cell membrane. Regulates membrane-cell wall junctions and localized cell wall deposition. Required for establishment of the Casparian strip membrane domain (CSD) and the subsequent formation of Casparian strips, a cell wall modification of the root endodermis that determines an apoplastic barrier between the intraorganismal apoplasm and the extraorganismal apoplasm and prevents lateral diffusion. The protein is Casparian strip membrane protein 3 of Arabidopsis lyrata subsp. lyrata (Lyre-leaved rock-cress).